A 723-amino-acid chain; its full sequence is Catalase-peroxidase (723 aa).

The segment at residues 98 to 226 (WHSAGSYRVG…LAAVMMGLIY (129 aa)) is a cross-link (tryptophyl-tyrosyl-methioninium (Trp-Tyr) (with M-252)). Histidine 99 (proton acceptor) is an active-site residue. A cross-link (tryptophyl-tyrosyl-methioninium (Tyr-Met) (with W-98)) is located at residues 226-252 (YVNPEGVDGNPDPLKTAKDMRVTFARM). Histidine 267 contacts heme b.

The protein belongs to the peroxidase family. Peroxidase/catalase subfamily. Homodimer or homotetramer. Requires heme b as cofactor. In terms of processing, formation of the three residue Trp-Tyr-Met cross-link is important for the catalase, but not the peroxidase activity of the enzyme.

The catalysed reaction is H2O2 + AH2 = A + 2 H2O. It carries out the reaction 2 H2O2 = O2 + 2 H2O. In terms of biological role, bifunctional enzyme with both catalase and broad-spectrum peroxidase activity. The sequence is that of Catalase-peroxidase from Vibrio vulnificus (strain YJ016).